A 90-amino-acid polypeptide reads, in one-letter code: DNA-binding protein HU (90 aa).

Belongs to the bacterial histone-like protein family. Homodimer.

In terms of biological role, histone-like DNA-binding protein which is capable of wrapping DNA to stabilize it, and thus to prevent its denaturation under extreme environmental conditions. This Haemophilus influenzae (strain ATCC 51907 / DSM 11121 / KW20 / Rd) protein is DNA-binding protein HU (hup).